The following is a 169-amino-acid chain: Ribosome maturation factor RimM (169 aa).

One can recognise a PRC barrel domain in the interval 94–168; it reads DDEFYHADLI…RIVADPPEGL (75 aa).

It belongs to the RimM family. In terms of assembly, binds ribosomal protein uS19.

The protein localises to the cytoplasm. An accessory protein needed during the final step in the assembly of 30S ribosomal subunit, possibly for assembly of the head region. Essential for efficient processing of 16S rRNA. May be needed both before and after RbfA during the maturation of 16S rRNA. It has affinity for free ribosomal 30S subunits but not for 70S ribosomes. This Cereibacter sphaeroides (strain ATCC 17023 / DSM 158 / JCM 6121 / CCUG 31486 / LMG 2827 / NBRC 12203 / NCIMB 8253 / ATH 2.4.1.) (Rhodobacter sphaeroides) protein is Ribosome maturation factor RimM.